The chain runs to 525 residues: Rho guanine nucleotide exchange factor gef3 (525 aa).

The 197-residue stretch at 72-268 folds into the DH domain; it reads AIISVLEEFR…EIASQRMNEL (197 aa).

Its subcellular location is the cytoplasm. Has a role in the control of cell polarity and cytokinesis. Involved in bipolar growth and septum formation. This is Rho guanine nucleotide exchange factor gef3 (gef3) from Schizosaccharomyces pombe (strain 972 / ATCC 24843) (Fission yeast).